Here is a 429-residue protein sequence, read N- to C-terminus: BURP domain-containing protein 3 (429 aa).

The N-terminal stretch at 1–21 is a signal peptide; it reads MDRLLACLLGFLLIASVGSHA. Positions 59 to 81 are disordered; it reads GGGVHVDAGHGKPGGTTVDVGKG. In terms of domain architecture, BURP spans 213–428; sequence FFLEKDLHPG…PQDHVVWTRS (216 aa).

In terms of tissue distribution, expressed in stems, leaves, shoot, panicles and stamen.

The chain is BURP domain-containing protein 3 (BURP3) from Oryza sativa subsp. japonica (Rice).